The primary structure comprises 622 residues: MFDIKEQLKLLPDKPGVYLMKNKANEIIYVGKAISLKNRVRQYFQSSNNQHPKVRAMVTHINFFEYIVTDSELEALILECNLIKENRPKYNVLLRDDKTYPYIKVTMNETFPRVLKTRKVLKDKAKYFGPYTNISALNETLEVIHQMYPIRVCGKNIEKMIERQERPCLNYHIRKCIGPCTGMVNDETYQQMIHEIILFLGGKEDELIKKIEEKMKRAAEKMDFEGAAHYRDQRQALLDIIERQKVVSVNDIDQDIIAMAKGEQESCVQVFFVRGGKLVQREHYILTTREDEDEKEILSAFIKQFYGETNFIPKEVLVEREVEDQELMAQWLTNKRGNHVKVRAPLRGEKKSMIQLVKRNAALTMGQREETQRKSKEKTEGAMVVLQEALGLADAIHRVEAFDISNTQGMESVGSMVVFEGGKPKNKDYRRFKIKTIQGANDYGSIEEIIYRRYKRGVDETKAMIENTMTVQEGKFSLFPDLIMVDGGLGQVTSVKKGLAALGILIPVCGMVKDERHRTRGLVYEGKEIPIERPSHLLRFITQVQDEVHRFAITYHRSLRTKSILHSVLEDIPGIGEKRRKSLMKHFESIDKMKQATIEELIEVEGLNRKVAENMYHFFRKQ.

The GIY-YIG domain occupies 13 to 92 (DKPGVYLMKN…IKENRPKYNV (80 aa)). Residues 205-240 (DELIKKIEEKMKRAAEKMDFEGAAHYRDQRQALLDI) enclose the UVR domain.

It belongs to the UvrC family. Interacts with UvrB in an incision complex.

It is found in the cytoplasm. Its function is as follows. The UvrABC repair system catalyzes the recognition and processing of DNA lesions. UvrC both incises the 5' and 3' sides of the lesion. The N-terminal half is responsible for the 3' incision and the C-terminal half is responsible for the 5' incision. The polypeptide is UvrABC system protein C (Alkaliphilus metalliredigens (strain QYMF)).